We begin with the raw amino-acid sequence, 290 residues long: Arylamine N-acetyltransferase 2 (290 aa).

The Acyl-thioester intermediate role is filled by Cys68. 2 residues coordinate CoA: Ser103 and Gly104. 106-107 (IH) contacts substrate. Residues His107 and Asp122 contribute to the active site. A CoA-binding site is contributed by Tyr208.

Belongs to the arylamine N-acetyltransferase family.

The protein resides in the cytoplasm. The enzyme catalyses an arylamine + acetyl-CoA = an N-acetylarylamine + CoA. It carries out the reaction an N-hydroxyarylamine + acetyl-CoA = an N-acetoxyarylamine + CoA. Functionally, catalyzes the N- or O-acetylation of various arylamine and heterocyclic amine substrates, and participates in the detoxification of a plethora of hydrazine and arylamine drugs. This Mesocricetus auratus (Golden hamster) protein is Arylamine N-acetyltransferase 2 (NAT2).